Reading from the N-terminus, the 318-residue chain is Pantothenate kinase (318 aa).

G96 to S103 serves as a coordination point for ATP.

This sequence belongs to the prokaryotic pantothenate kinase family.

The protein resides in the cytoplasm. It carries out the reaction (R)-pantothenate + ATP = (R)-4'-phosphopantothenate + ADP + H(+). The protein operates within cofactor biosynthesis; coenzyme A biosynthesis; CoA from (R)-pantothenate: step 1/5. The protein is Pantothenate kinase of Coxiella burnetii (strain Dugway 5J108-111).